A 1723-amino-acid chain; its full sequence is MRTGRVTPGLAAGLLLLLLRSFGLVEPSESSGNDPFTIVHENTGKCIQPLSDWVVAQDCSGTNNMLWKWVSQHRLFHLESQKCLGLDITKATDNLRMFSCDSTVMLWWKCEHHSLYTAAQYRLALKDGYAVANTNTSDVWKKGGSEENLCAQPYHEIYTRDGNSYGRPCEFPFLIGETWYHDCIHDEDHSGPWCATTLSYEYDQKWGICLLPESGCEGNWEKNEQIGSCYQFNNQEILSWKEAYVSCQNQGADLLSIHSAAELAYITGKEDIARLVWLGLNQLYSARGWEWSDFRPLKFLNWDPGTPVAPVIGGSSCARMDTESGLWQSVSCESQQPYVCKKPLNNTLELPDVWTYTDTHCHVGWLPNNGFCYLLANESSSWDAAHLKCKAFGADLISMHSLADVEVVVTKLHNGDVKKEIWTGLKNTNSPALFQWSDGTEVTLTYWNENEPSVPFNKTPNCVSYLGKLGQWKVQSCEKKLRYVCKKKGEITKDAESDKLCPPDEGWKRHGETCYKIYEKEAPFGTNCNLTITSRFEQEFLNYMMKNYDKSLRKYFWTGLRDPDSRGEYSWAVAQGVKQAVTFSNWNFLEPASPGGCVAMSTGKTLGKWEVKNCRSFRALSICKKVSEPQEPEEAAPKPDDPCPEGWHTFPSSLSCYKVFHIERIVRKRNWEEAERFCQALGAHLPSFSRREEIKDFVHLLKDQFSGQRWLWIGLNKRSPDLQGSWQWSDRTPVSAVMMEPEFQQDFDIRDCAAIKVLDVPWRRVWHLYEDKDYAYWKPFACDAKLEWVCQIPKGSTPQMPDWYNPERTGIHGPPVIIEGSEYWFVADPHLNYEEAVLYCASNHSFLATITSFTGLKAIKNKLANISGEEQKWWVKTSENPIDRYFLGSRRRLWHHFPMTFGDECLHMSAKTWLVDLSKRADCNAKLPFICERYNVSSLEKYSPDPAAKVQCTEKWIPFQNKCFLKVNSGPVTFSQASGICHSYGGTLPSVLSRGEQDFIISLLPEMEASLWIGLRWTAYERINRWTDNRELTYSNFHPLLVGRRLSIPTNFFDDESHFHCALILNLKKSPLTGTWNFTSCSERHSLSLCQKYSETEDGQPWENTSKTVKYLNNLYKIISKPLTWHGALKECMKEKMRLVSITDPYQQAFLAVQATLRNSSFWIGLSSQDDELNFGWSDGKRLQFSNWAGSNEQLDDCVILDTDGFWKTADCDDNQPGAICYYPGNETEEEVRALDTAKCPSPVQSTPWIPFQNSCYNFMITNNRHKTVTPEEVQSTCEKLHSKAHSLSIRNEEENTFVVEQLLYFNYIASWVMLGITYENNSLMWFDKTALSYTHWRTGRPTVKNGKFLAGLSTDGFWDIQSFNVIEETLHFYQHSISACKIEMVDYEDKHNGTLPQFIPYKDGVYSVIQKKVTWYEALNACSQSGGELASVHNPNGKLFLEDIVNRDGFPLWVGLSSHDGSESSFEWSDGRAFDYVPWQSLQSPGDCVVLYPKGIWRREKCLSVKDGAICYKPTKDKKLIFHVKSSKCPVAKRDGPQWVQYGGHCYASDQVLHSFSEAKQVCQELDHSATVVTIADENENKFVSRLMRENYNITMRVWLGLSQHSLDQSWSWLDGLDVTFVKWENKTKDGDGKCSILIASNETWRKVHCSRGYARAVCKIPLSPDYTGIAILFAVLCLLGLISLAIWFLLQRSHIRWTGFSSVRYEHGTNEDEVMLPSFHD.

A signal peptide spans 1-27 (MRTGRVTPGLAAGLLLLLLRSFGLVEP). Topologically, residues 28–1667 (SESSGNDPFT…AVCKIPLSPD (1640 aa)) are extracellular. The region spanning 33–182 (NDPFTIVHEN…FLIGETWYHD (150 aa)) is the Ricin B-type lectin domain. Asn135 carries an N-linked (GlcNAc...) asparagine glycan. The 48-residue stretch at 164 to 211 (SYGRPCEFPFLIGETWYHDCIHDEDHSGPWCATTLSYEYDQKWGICLL) folds into the Fibronectin type-II domain. 4 disulfides stabilise this stretch: Cys169-Cys194, Cys183-Cys209, Cys247-Cys340, and Cys317-Cys332. Residues 225–341 (QIGSCYQFNN…CESQQPYVCK (117 aa)) form the C-type lectin 1 domain. N-linked (GlcNAc...) asparagine glycosylation is found at Asn345 and Asn377. C-type lectin domains lie at 368 to 486 (NNGF…YVCK), 493 to 625 (KDAE…ICKK), and 652 to 791 (SSLS…WVCQ). Cystine bridges form between Cys389/Cys485 and Cys462/Cys477. The N-linked (GlcNAc...) asparagine glycan is linked to Asn529. Cystine bridges form between Cys597-Cys614, Cys678-Cys790, and Cys752-Cys782. Residues Asn843 and Asn865 are each glycosylated (N-linked (GlcNAc...) asparagine). Tyr934 carries the phosphotyrosine modification. N-linked (GlcNAc...) asparagine glycans are attached at residues Asn935, Asn1077, and Asn1104. In terms of domain architecture, C-type lectin 5 spans 959-1092 (FQNKCFLKVN…ERHSLSLCQK (134 aa)). A disulfide bridge connects residues Cys1061 and Cys1081. Positions 1111-1223 (YLNNLYKIIS…DNQPGAICYY (113 aa)) constitute a C-type lectin 6 domain. Cys1198 and Cys1212 are oxidised to a cystine. Residues Asn1226, Asn1321, and Asn1393 are each glycosylated (N-linked (GlcNAc...) asparagine). Residues 1252-1375 (FQNSCYNFMI…VIEETLHFYQ (124 aa)) enclose the C-type lectin 7 domain. C-type lectin domains lie at 1402-1514 (YKDG…ICYK) and 1543-1662 (YGGH…VCKI). Cys1489 and Cys1503 are joined by a disulfide. 2 N-linked (GlcNAc...) asparagine glycosylation sites follow: Asn1594 and Asn1627. The cysteines at positions 1636 and 1651 are disulfide-linked. The chain crosses the membrane as a helical span at residues 1668 to 1692 (YTGIAILFAVLCLLGLISLAIWFLL). Over 1693-1723 (QRSHIRWTGFSSVRYEHGTNEDEVMLPSFHD) the chain is Cytoplasmic. Residues Ser1704 and Ser1720 each carry the phosphoserine modification.

Post-translationally, N-glycosylated. Expressed in dendritic and thymic epithelial cells and lymph nodes.

Its subcellular location is the membrane. Acts as an endocytic receptor to direct captured antigens from the extracellular space to a specialized antigen-processing compartment. Causes reduced proliferation of B lymphocytes. The chain is Lymphocyte antigen 75 (Ly75) from Mus musculus (Mouse).